A 591-amino-acid chain; its full sequence is Transcription factor COE1 (591 aa).

The residue at position 1 (M1) is an N-acetylmethionine. Residues 1 to 14 show a composition bias toward polar residues; it reads MFGIQESIQRSGSS. Residues 1–21 are disordered; that stretch reads MFGIQESIQRSGSSMKEEPLG. K16 participates in a covalent cross-link: Glycyl lysine isopeptide (Lys-Gly) (interchain with G-Cter in SUMO1); alternate. K16 is covalently cross-linked (Glycyl lysine isopeptide (Lys-Gly) (interchain with G-Cter in SUMO2); alternate). The tract at residues 63–66 is interaction with DNA; it reads RKSN. A C5-type zinc finger spans residues 151 to 170; sequence CRVLLTHEIMCSRCCDKKSC. Interaction with DNA stretches follow at residues 197 to 204 and 236 to 239; these read NCLKNAGN and NNSK. The IPT/TIG domain maps to 262-345; it reads PCIKAISPSE…KGTPGRFIYT (84 aa). Residues 457-480 form a disordered region; the sequence is GFTRNSSSVSPHGYVPSTTPQQTN.

Belongs to the COE family. Homodimer. Interacts with ZNF423 and ZNF521, leading to prevent EBF1 to bind DNA and activate target genes. Interacts with CCR4-NOT component CNOT3. In terms of assembly, (Microbial infection) Interacts with Epstein-barr virus protein EBNA2.

The protein resides in the nucleus. Its function is as follows. Key pioneer transcription factor of B-cell specification and commitment. Recognizes variations of the palindromic sequence 5'-ATTCCCNNGGGAATT-3'. Operates in a transcription factor network to activate B-cell-specific genes and repress genes associated with alternative cell fates. For instance, positively regulates many B-cell specific genes including BCR or CD40 while repressing genes that direct cells into alternative lineages, including GATA3 and TCF7 for the T-cell lineage. In addition to its role during lymphopoiesis, controls the thermogenic gene program in adipocytes during development and in response to environmental cold. Functionally, (Microbial infection) Acts as a chromatin anchor for Epstein-Barr virus EBNA2 to mediate the assembly of EBNA2 chromatin complexes in B-cells. In addition, binds to the viral LMP1 proximal promoter and promotes its expression during latency. The polypeptide is Transcription factor COE1 (EBF1) (Homo sapiens (Human)).